A 669-amino-acid polypeptide reads, in one-letter code: Threonine--tRNA ligase (669 aa).

Residues 3-60 (DAQQITLIVDGEETKVTEGTTGAELFFERRDVVVARVNGVLKDLDQVLTEGADVEGVT) form the TGS domain. The segment at 260–566 (DHRKLGVELD…LTEHYAGAFP (307 aa)) is catalytic. Zn(2+)-binding residues include cysteine 365, histidine 416, and histidine 543.

It belongs to the class-II aminoacyl-tRNA synthetase family. As to quaternary structure, homodimer. The cofactor is Zn(2+).

Its subcellular location is the cytoplasm. The enzyme catalyses tRNA(Thr) + L-threonine + ATP = L-threonyl-tRNA(Thr) + AMP + diphosphate + H(+). Functionally, catalyzes the attachment of threonine to tRNA(Thr) in a two-step reaction: L-threonine is first activated by ATP to form Thr-AMP and then transferred to the acceptor end of tRNA(Thr). Also edits incorrectly charged L-seryl-tRNA(Thr). This Paenarthrobacter aurescens (strain TC1) protein is Threonine--tRNA ligase.